A 256-amino-acid chain; its full sequence is Deoxyribose-phosphate aldolase (256 aa).

The active-site Proton donor/acceptor is the D102. K165 functions as the Schiff-base intermediate with acetaldehyde in the catalytic mechanism. The active-site Proton donor/acceptor is the K197.

This sequence belongs to the DeoC/FbaB aldolase family. DeoC type 2 subfamily.

The protein localises to the cytoplasm. It catalyses the reaction 2-deoxy-D-ribose 5-phosphate = D-glyceraldehyde 3-phosphate + acetaldehyde. It functions in the pathway carbohydrate degradation; 2-deoxy-D-ribose 1-phosphate degradation; D-glyceraldehyde 3-phosphate and acetaldehyde from 2-deoxy-alpha-D-ribose 1-phosphate: step 2/2. Its function is as follows. Catalyzes a reversible aldol reaction between acetaldehyde and D-glyceraldehyde 3-phosphate to generate 2-deoxy-D-ribose 5-phosphate. The sequence is that of Deoxyribose-phosphate aldolase from Shewanella sp. (strain MR-7).